Consider the following 51-residue polypeptide: Large ribosomal subunit protein bL33 (51 aa).

The protein belongs to the bacterial ribosomal protein bL33 family.

This is Large ribosomal subunit protein bL33 from Nitrosococcus oceani (strain ATCC 19707 / BCRC 17464 / JCM 30415 / NCIMB 11848 / C-107).